Reading from the N-terminus, the 422-residue chain is 3-phosphoshikimate 1-carboxyvinyltransferase (422 aa).

The 3-phosphoshikimate site is built by lysine 20, serine 21, and arginine 25. Lysine 20 contributes to the phosphoenolpyruvate binding site. Positions 92 and 120 each coordinate phosphoenolpyruvate. 3-phosphoshikimate is bound by residues serine 163, serine 164, glutamine 165, serine 191, aspartate 304, and lysine 331. Position 165 (glutamine 165) interacts with phosphoenolpyruvate. Aspartate 304 acts as the Proton acceptor in catalysis. Phosphoenolpyruvate is bound by residues arginine 335 and arginine 377.

The protein belongs to the EPSP synthase family. Monomer.

The protein localises to the cytoplasm. It catalyses the reaction 3-phosphoshikimate + phosphoenolpyruvate = 5-O-(1-carboxyvinyl)-3-phosphoshikimate + phosphate. The protein operates within metabolic intermediate biosynthesis; chorismate biosynthesis. Its function is as follows. Catalyzes the transfer of the enolpyruvyl moiety of phosphoenolpyruvate (PEP) to the 5-hydroxyl of shikimate-3-phosphate (S3P) to produce enolpyruvyl shikimate-3-phosphate and inorganic phosphate. In Methanocorpusculum labreanum (strain ATCC 43576 / DSM 4855 / Z), this protein is 3-phosphoshikimate 1-carboxyvinyltransferase.